Here is a 250-residue protein sequence, read N- to C-terminus: Aminoglycoside 3'-phosphotransferase (250 aa).

The Proton acceptor role is filled by Asp-178.

It belongs to the aminoglycoside phosphotransferase family.

It catalyses the reaction kanamycin A + ATP = kanamycin 3'-phosphate + ADP + H(+). Its function is as follows. Resistance to kanamycin and structurally-related aminoglycosides, including amikacin. The protein is Aminoglycoside 3'-phosphotransferase (aphA-7) of Campylobacter jejuni.